The chain runs to 174 residues: Chorion class CB protein M5H4 (174 aa).

The N-terminal stretch at 1-20 (MTTIVVLICASALFVQLAFS) is a signal peptide. The left arm stretch occupies residues 21 to 71 (QCLGRDPVIGFGGAYGSGWGGYDAISPYDGLGYGVPYSAGFIGLSPSNLAA). The segment at 72-142 (SCGGALAVNS…GDGAIGIVSE (71 aa)) is central domain. Residues 143-174 (APIVAPASIGYGQWPVNAGYKGIGPCGCGGLY) are right arm.

This sequence belongs to the chorion protein family.

Functionally, this protein is one of many from the eggshell of the silk moth. The protein is Chorion class CB protein M5H4 of Bombyx mori (Silk moth).